The primary structure comprises 746 residues: UvrABC system protein C (746 aa).

The GIY-YIG domain occupies 18–97 (AKPGVYKWRD…IKEFDPRFNV (80 aa)). The region spanning 211–246 (RPYIAQLTRDMKEASAELEFEKAARLRDQIQMLETV) is the UVR domain. Residues 557-577 (ANGNDNGEGGSDISGKGHAVP) form a disordered region.

This sequence belongs to the UvrC family. In terms of assembly, interacts with UvrB in an incision complex.

The protein localises to the cytoplasm. The UvrABC repair system catalyzes the recognition and processing of DNA lesions. UvrC both incises the 5' and 3' sides of the lesion. The N-terminal half is responsible for the 3' incision and the C-terminal half is responsible for the 5' incision. This Bifidobacterium longum (strain NCC 2705) protein is UvrABC system protein C.